We begin with the raw amino-acid sequence, 381 residues long: Erythronate-4-phosphate dehydrogenase (381 aa).

The substrate site is built by Ser-45 and Thr-66. Asp-146 and Thr-173 together coordinate NAD(+). Arg-206 is a catalytic residue. Asp-230 provides a ligand contact to NAD(+). Residue Glu-235 is part of the active site. His-252 (proton donor) is an active-site residue. Residue Gly-255 coordinates NAD(+). Tyr-256 contacts substrate.

This sequence belongs to the D-isomer specific 2-hydroxyacid dehydrogenase family. PdxB subfamily. As to quaternary structure, homodimer.

The protein localises to the cytoplasm. The catalysed reaction is 4-phospho-D-erythronate + NAD(+) = (R)-3-hydroxy-2-oxo-4-phosphooxybutanoate + NADH + H(+). Its pathway is cofactor biosynthesis; pyridoxine 5'-phosphate biosynthesis; pyridoxine 5'-phosphate from D-erythrose 4-phosphate: step 2/5. In terms of biological role, catalyzes the oxidation of erythronate-4-phosphate to 3-hydroxy-2-oxo-4-phosphonooxybutanoate. The sequence is that of Erythronate-4-phosphate dehydrogenase from Hahella chejuensis (strain KCTC 2396).